Reading from the N-terminus, the 238-residue chain is Ribonuclease PH (238 aa).

Positions 64 to 86 (GMLPRSTGSRMDREAARGKQSGR) are disordered. Phosphate is bound by residues Arg86 and 124–126 (GTR).

This sequence belongs to the RNase PH family. Homohexameric ring arranged as a trimer of dimers.

The enzyme catalyses tRNA(n+1) + phosphate = tRNA(n) + a ribonucleoside 5'-diphosphate. Phosphorolytic 3'-5' exoribonuclease that plays an important role in tRNA 3'-end maturation. Removes nucleotide residues following the 3'-CCA terminus of tRNAs; can also add nucleotides to the ends of RNA molecules by using nucleoside diphosphates as substrates, but this may not be physiologically important. Probably plays a role in initiation of 16S rRNA degradation (leading to ribosome degradation) during starvation. In Methylobacillus flagellatus (strain ATCC 51484 / DSM 6875 / VKM B-1610 / KT), this protein is Ribonuclease PH.